The following is a 365-amino-acid chain: Probable receptor-like protein kinase At2g47060 (365 aa).

Positions 18–48 (DYGGRHNQAKHFPPGNDARHHQASETAQKGP) are disordered. The region spanning 73 to 353 (FGSNSLIGEG…IVVKALQPLL (281 aa)) is the Protein kinase domain. ATP contacts are provided by residues 79 to 87 (IGEGSYGRV) and lysine 101. Phosphotyrosine is present on tyrosine 145. Aspartate 203 acts as the Proton acceptor in catalysis. 2 positions are modified to phosphoserine: serine 207 and serine 237. 2 positions are modified to phosphothreonine: threonine 238 and threonine 243. Tyrosine 251 is modified (phosphotyrosine).

The protein belongs to the protein kinase superfamily. Ser/Thr protein kinase family.

It carries out the reaction L-seryl-[protein] + ATP = O-phospho-L-seryl-[protein] + ADP + H(+). It catalyses the reaction L-threonyl-[protein] + ATP = O-phospho-L-threonyl-[protein] + ADP + H(+). The chain is Probable receptor-like protein kinase At2g47060 from Arabidopsis thaliana (Mouse-ear cress).